The primary structure comprises 102 residues: Small ribosomal subunit protein uS10 (102 aa).

Belongs to the universal ribosomal protein uS10 family. Part of the 30S ribosomal subunit.

Its function is as follows. Involved in the binding of tRNA to the ribosomes. The chain is Small ribosomal subunit protein uS10 from Mycoplasma capricolum subsp. capricolum (strain California kid / ATCC 27343 / NCTC 10154).